The sequence spans 209 residues: Pyroglutamyl-peptidase 1 (209 aa).

Residues glutamate 85, cysteine 149, and histidine 168 contribute to the active site.

It belongs to the peptidase C15 family. In terms of assembly, monomer.

The protein resides in the cytoplasm. The enzyme catalyses Release of an N-terminal pyroglutamyl group from a polypeptide, the second amino acid generally not being Pro.. Functionally, removes 5-oxoproline from various penultimate amino acid residues except L-proline. The polypeptide is Pyroglutamyl-peptidase 1 (Pgpep1) (Mus musculus (Mouse)).